Here is a 449-residue protein sequence, read N- to C-terminus: UNC93-like protein MFSD11 (449 aa).

A helical transmembrane segment spans residues 8-28 (LFNIVILGVAFMFMFTAFQTC). An N-linked (GlcNAc...) asparagine glycan is attached at Asn40. Transmembrane regions (helical) follow at residues 53-73 (AIIYGVFSASNLITPSVVAIV), 74-94 (GPQISMFVSGLFYSMYIAVFI), 96-116 (PFPWSFYTASVFIGIAAAVLW), 138-158 (IFWALLQSSLFFGNLYIYFAW), and 170-190 (RTVFIALTVISLVGTVLFFLI). Ser204 is subject to Phosphoserine. The next 6 membrane-spanning stretches (helical) occupy residues 239–259 (MLLLSVTTAYTGLELTFFSGV), 277–297 (LIGLSGIFIGIGEILGGSLFG), 309–329 (PVVLLGTLVHFVAFYLIFLNM), 359–379 (FLLGLGDSCFNTQLLSILGFL), 385–405 (APAFAVFKFVQSICAAVAFFY), and 410–430 (LLHWQLLVMVIFGFFGTISFF).

Belongs to the unc-93 family. In terms of tissue distribution, widely expressed.

It is found in the membrane. The protein is UNC93-like protein MFSD11 (Mfsd11) of Mus musculus (Mouse).